A 265-amino-acid polypeptide reads, in one-letter code: Short-chain dehydrogenase/reductase fsr5 (265 aa).

Residues 1-32 (MASLGKYVSKLAGSRVLVIGGSSGIGFGVAEA) form the signal peptide. NADP(+) is bound by residues S22, S23, I25, S45, and K50. An N-linked (GlcNAc...) asparagine glycan is attached at N62. Residues N88, R130, and T204 each coordinate NADP(+). N-linked (GlcNAc...) asparagine glycosylation is found at N218 and N250.

The protein belongs to the short-chain dehydrogenases/reductases (SDR) family.

Functionally, short-chain dehydrogenase/reductase; part of the gene cluster that mediates the biosynthesis of fusarubins, highly pigmented naphthoquinones responsible for the coloration of the fruiting bodies. The non-reducing polyketide synthase FSR1 is responsible for the condensation of seven acetyl-CoA units to yield a haptaketide. After rings A and B are formed by aldol-type cyclization, the PKS-derived product is released as 6-O-demethylfusarubinaldehyde. Then, two hydroxyl groups at C-5 and C-10 are incorporated by FSR3, and simultaneously hydroxyl groups at C-6 and C-8 are methylated by FSR2. The aldehyde is, on the one hand, reduced by FSR3 to 8-O-methylfusarubin alcohol, which equilibrates mainly with 8-O-methylfusarubin and only small amounts of 8-O-methylnectriafurone. On the other hand, the aldehyde can be oxidized to form 8-O-methylfusarubinic acid, a reaction driven by FSR3 equilibrating with 8-O-methylfusarubinlactone, finally resulting in 8-O-methylanhydrofusarubinlactol after a further reduction step and loss of water. 8-O-Methylfusarubinic acid can also undergo decarboxylation, resulting in 8-O-methyl-13-hydroxynorjavanicin after another hydroxylation step at C-13. Both steps are most likely also accomplished by FSR3. No enzymatic function has been determined so far for either FSR4 and FSR5. Their deletion does not alter the product spectrum, but the possibility that they catalyze specific enzymatic steps during perithecium development cannot be ruled out. FSR4 might possess a regulatory function in the biosynthesis of fusarubins. The chain is Short-chain dehydrogenase/reductase fsr5 from Gibberella fujikuroi (strain CBS 195.34 / IMI 58289 / NRRL A-6831) (Bakanae and foot rot disease fungus).